The chain runs to 321 residues: MRILPKSGGGALCLLFVFALCSVAHSLSCDVKVVGDVEVIGYSEISKIKIPNAFSGLRVTIECKAADSKGHFVTRGSGEVDETGKFHLNIPHDIVGDDGTLKEACYAHLQSAFGNPCPAHDGLEASKIVFLSKSGQNHVLGLKKSLKFSPEVCISKFFWHMPKFPLPPPLNLPPLTFPKIKKPCPPIYKPPVVIPKKPCPPKIAHKPIYKPPVPIYKPPVPIYKPPVVIPKKPCPPKIHKPIYKPPVPIYKPPVVIPKKTFPPLHKPIYKHPVPIYKPIFKPPVVVIPKKPCPPLPKFPHFPPKYIPHPKFGKWPPFPSHP.

The signal sequence occupies residues 1–26 (MRILPKSGGGALCLLFVFALCSVAHS). Tandem repeats lie at residues 168–172 (PPLNL), 173–176 (PPLT), 177–181 (FPKIK), 185–189 (PPIYK), 190–194 (PPVVI), 198–202 (PCPPK), 207–211 (PIYKP), 212–217 (PVPIYK), 218–223 (PPVPIY), 225–229 (PPVVI), 234–238 (CPPKI), 240–244 (KPIYK), 245–251 (PPVPIYK), 252–256 (PPVVI), 262–266 (PPLHK), 267–271 (PIYKH), 272–276 (PVPIY), 277–281 (KPIFK), 282–286 (PPVVV), 288–292 (PKKPC), 293–297 (PPLPK), 298–302 (FPHFP), 303–307 (PKYIP), and 315–319 (PPFPS). Residues 168–319 (PPLNLPPLTF…KFGKWPPFPS (152 aa)) form a 24 X 5 AA approximate repeats region.

This sequence belongs to the plant proline-rich protein superfamily. In terms of tissue distribution, mostly expressed in aerial organs, particularly in expanding leaves, stems, flowers, and siliques.

It localises to the secreted. The protein resides in the cell wall. The sequence is that of Proline-rich protein 2 (PRP2) from Arabidopsis thaliana (Mouse-ear cress).